We begin with the raw amino-acid sequence, 634 residues long: Ras and EF-hand domain-containing protein homolog (634 aa).

EF-hand domains are found at residues 5-33 and 33-68; these read DVENLFSLCDSESKGFLTMEDLKKVCPQL and LDDNDLRFIFNELDRDGSGKIEKMEFLQGFQETVQH. Ca(2+)-binding residues include aspartate 46, aspartate 48, serine 50, lysine 52, and glutamate 57. A coiled-coil region spans residues 169 to 310; sequence LSEKKHENER…RADFDQKQDE (142 aa). 2 disordered regions span residues 216–237 and 308–328; these read ERERLTKEKEEMRERMSEEMSE and QDELSARRDQASHATEESESV. Residues 449–454, 552–555, and 585–586 each bind GTP; these read AVGKSS, NKVD, and AL. Residues 632 to 634 constitute a propeptide, removed in mature form; that stretch reads RGS.

Belongs to the small GTPase superfamily. Rab family. In terms of assembly, homodimer.

Its subcellular location is the cytoplasm. The protein resides in the perinuclear region. Binds GTP and GDP. Plays a role in uterine seam cell development. The protein is Ras and EF-hand domain-containing protein homolog of Caenorhabditis briggsae.